The following is a 539-amino-acid chain: Glycerophosphoinositol inositolphosphodiesterase GDPD2 (539 aa).

Over 1-40 (MADSPGCCSIWARCLHCLYSCHWRKYPKQKMQTSKCDCIW) the chain is Cytoplasmic. The helical transmembrane segment at 41–61 (FGLLFLTFLLSLGWLYIGLIL) threads the bilayer. Residues 62–83 (LNDLHNFNEFLFRHWGHWMDWS) are Extracellular-facing. Residues 84-104 (LIVLLVVSLLVTYASLLLLLG) traverse the membrane as a helical segment. Over 105–121 (LLLQLCGQPLHLHSLHK) the chain is Cytoplasmic. Residues 122–142 (VLLLLIVLLVAAGLVGLDIQW) form a helical membrane-spanning segment. Residues 143-154 (RQEWHSLRLSLQ) are Extracellular-facing. Residues 155–175 (ATAPFLHIGAVAGITLLAWPV) traverse the membrane as a helical segment. Over 176–189 (ADTFYRIHPRGPKV) the chain is Cytoplasmic. The helical transmembrane segment at 190–210 (LLLLLFFGVTLVIYLMPLLFI) threads the bilayer. Residues 211–491 (SSPCIMKLRD…PLWLLPPQKY (281 aa)) lie on the Extracellular side of the membrane. The 256-residue stretch at 225–480 (PGLVGHRGAP…NACQLLQQMQ (256 aa)) folds into the GP-PDE domain. The a divalent metal cation site is built by Glu-257, Asp-259, and His-272. An N-linked (GlcNAc...) asparagine glycan is attached at Asn-333. The helical transmembrane segment at 492–512 (LMIWVITDCASILLLLSIFLL) threads the bilayer. Residues 513–539 (RGGCAKRNRTGLETAVLLTKINNFASE) are Cytoplasmic-facing.

The protein belongs to the glycerophosphoryl diester phosphodiesterase family. Ca(2+) serves as cofactor. Detected in spleen, femur and calvaria.

It localises to the cell membrane. It is found in the cytoplasm. Its subcellular location is the cytoskeleton. It catalyses the reaction sn-glycero-3-phospho-1D-myo-inositol + H2O = 1D-myo-inositol 1-phosphate + glycerol + H(+). Functionally, has glycerophosphoinositol inositolphosphodiesterase activity and specifically hydrolyzes glycerophosphoinositol, with no activity for other substrates such as glycerophosphoinositol 4-phosphate, glycerophosphocholine, glycerophosphoethanolamine, and glycerophosphoserine. Accelerates the program of osteoblast differentiation and growth. May play a role in remodeling of the actin cytoskeleton. The polypeptide is Glycerophosphoinositol inositolphosphodiesterase GDPD2 (Gdpd2) (Mus musculus (Mouse)).